Consider the following 508-residue polypeptide: MGLPWYRVHTVVLNDPGRLIAVHLMHTALVSGWAGSMALYELAVFDPSDPVLDPMWRQGMFVIPFMTRLGVTQSWGGWSITGETVTNAGLWSYEGVAAVHIVLSGLLFLAAIWHWVYWDLELFRDERTGKPSLDLPKIFGIHLFLSGVLCFGFGAFHVTGLFGPGVWVSDPYGLTGRVQPVAPAWGAEGFDPFNPGGIASHHIAAGILGILAGLFHLSVRPPQRLYKGLRMGNVETVLSSSIAAVFFAAFVVAGTMWYGCAATPVELFGPTRYQWDQGYFQQEIDRRIRNSVAENVSLSEAWSKIPEKLAFYDYIGNNPAKGGLFRAGAMDNGDGIAVGWLGHAVFKDKEGNELFVRRMPTFFETFPVVLVDEEGIVRADVPFRRAESKYSIEQVGVSVEFYGGELNGVSFSDPATVKKYARRAQLGEIFEFDRATLKSDGVFRSSPRGWFTFGHACFALLFFFGHLWHGSRTLFRDVFAGIDPDLDSQVEFGLFQKLGDPTTRKQTV.

The next 6 membrane-spanning stretches (helical) occupy residues 21–36 (AVHL…WAGS), 101–115 (IVLS…IWHW), 140–156 (GIHL…FGAF), 203–218 (IAAG…FHLS), 237–252 (VLSS…AFVV), and 457–472 (CFAL…HGSR).

The protein belongs to the PsbB/PsbC family. PsbB subfamily. PSII is composed of 1 copy each of membrane proteins PsbA, PsbB, PsbC, PsbD, PsbE, PsbF, PsbH, PsbI, PsbJ, PsbK, PsbL, PsbM, PsbT, PsbX, PsbY, PsbZ, Psb30/Ycf12, at least 3 peripheral proteins of the oxygen-evolving complex and a large number of cofactors. It forms dimeric complexes. It depends on Binds multiple chlorophylls. PSII binds additional chlorophylls, carotenoids and specific lipids. as a cofactor.

It localises to the plastid. It is found in the chloroplast thylakoid membrane. One of the components of the core complex of photosystem II (PSII). It binds chlorophyll and helps catalyze the primary light-induced photochemical processes of PSII. PSII is a light-driven water:plastoquinone oxidoreductase, using light energy to abstract electrons from H(2)O, generating O(2) and a proton gradient subsequently used for ATP formation. This is Photosystem II CP47 reaction center protein from Zygnema circumcarinatum (Green alga).